The primary structure comprises 90 residues: Bombyxin D-1 (90 aa).

Residues Met1–Ser18 form the signal peptide. Disulfide bonds link Cys27/Cys77, Cys39/Cys90, and Cys76/Cys81. The propeptide at Ser48–Gly68 is c peptide like.

Belongs to the insulin family. As to quaternary structure, heterodimer of a B chain and an A chain linked by two disulfide bonds.

It is found in the secreted. Functionally, brain peptide responsible for activation of prothoracic glands to produce ecdysone in insects. This Bombyx mori (Silk moth) protein is Bombyxin D-1 (BBXD1).